A 107-amino-acid chain; its full sequence is Replication restart protein PriB (107 aa).

The SSB domain occupies isoleucine 8–aspartate 107.

Belongs to the PriB family. Homodimer. Interacts with PriA and DnaT. Component of the replication restart primosome. Primosome assembly occurs via a 'hand-off' mechanism. PriA binds to replication forks, subsequently PriB then DnaT bind; DnaT then displaces ssDNA to generate the helicase loading substrate.

Functionally, involved in the restart of stalled replication forks, which reloads the replicative helicase on sites other than the origin of replication; the PriA-PriB pathway is the major replication restart pathway. During primosome assembly it facilitates complex formation between PriA and DnaT on DNA; stabilizes PriA on DNA. Stimulates the DNA unwinding activity of PriA helicase. This Actinobacillus succinogenes (strain ATCC 55618 / DSM 22257 / CCUG 43843 / 130Z) protein is Replication restart protein PriB.